The sequence spans 269 residues: Novel plant SNARE 13 (269 aa).

At 1-217 the chain is on the cytoplasmic side; that stretch reads MASNLPMSPQ…IGRQVATDKC (217 aa). Positions 33-94 form a coiled coil; that stretch reads DKIKDSTRQS…KQSMIKELNS (62 aa). The residue at position 74 (serine 74) is a Phosphoserine. One can recognise a t-SNARE coiled-coil homology domain in the interval 146–208; that stretch reads MKRMDETDQA…KKASQLVKEI (63 aa). A helical; Anchor for type IV membrane protein membrane pass occupies residues 218 to 238; the sequence is IMGFLFLIVCGVVAIIIVKIV. Topologically, residues 239 to 269 are vesicular; sequence NPNNKDIRDIPGLAPPAQSRKLLYLRNQDYM.

Belongs to the novel plant SNARE family.

The protein localises to the membrane. Vesicle trafficking protein that functions in the secretory pathway. The polypeptide is Novel plant SNARE 13 (NPSN13) (Arabidopsis thaliana (Mouse-ear cress)).